Consider the following 216-residue polypeptide: Octanoyltransferase (216 aa).

A BPL/LPL catalytic domain is found at 32 to 207; the sequence is ENSPDELWLV…TFSQLLGYEH (176 aa). Substrate is bound by residues 71 to 78, 138 to 140, and 151 to 153; these read RGGQVTYH, SLG, and GLA. Cysteine 169 acts as the Acyl-thioester intermediate in catalysis.

The protein belongs to the LipB family.

Its subcellular location is the cytoplasm. The catalysed reaction is octanoyl-[ACP] + L-lysyl-[protein] = N(6)-octanoyl-L-lysyl-[protein] + holo-[ACP] + H(+). Its pathway is protein modification; protein lipoylation via endogenous pathway; protein N(6)-(lipoyl)lysine from octanoyl-[acyl-carrier-protein]: step 1/2. In terms of biological role, catalyzes the transfer of endogenously produced octanoic acid from octanoyl-acyl-carrier-protein onto the lipoyl domains of lipoate-dependent enzymes. Lipoyl-ACP can also act as a substrate although octanoyl-ACP is likely to be the physiological substrate. This is Octanoyltransferase from Shewanella amazonensis (strain ATCC BAA-1098 / SB2B).